Reading from the N-terminus, the 204-residue chain is UPF0134 protein MPN_655 (204 aa).

Positions 46 to 132 (EVENKPKIPI…FNEFKDSNNQ (87 aa)) are disordered. Positions 64–80 (SPKPLKPPKPPKPPKGP) are enriched in pro residues. Positions 117–132 (YVTRKEFNEFKDSNNQ) are enriched in basic and acidic residues.

It belongs to the UPF0134 family.

In Mycoplasma pneumoniae (strain ATCC 29342 / M129 / Subtype 1) (Mycoplasmoides pneumoniae), this protein is UPF0134 protein MPN_655.